The following is a 172-amino-acid chain: Ribosome maturation factor RimM (172 aa).

A PRC barrel domain is found at 94–167 (EGSYYYKDII…VAHVIVPEGL (74 aa)).

This sequence belongs to the RimM family. As to quaternary structure, binds ribosomal protein uS19.

The protein localises to the cytoplasm. Functionally, an accessory protein needed during the final step in the assembly of 30S ribosomal subunit, possibly for assembly of the head region. Essential for efficient processing of 16S rRNA. May be needed both before and after RbfA during the maturation of 16S rRNA. It has affinity for free ribosomal 30S subunits but not for 70S ribosomes. The polypeptide is Ribosome maturation factor RimM (Lacticaseibacillus paracasei (strain ATCC 334 / BCRC 17002 / CCUG 31169 / CIP 107868 / KCTC 3260 / NRRL B-441) (Lactobacillus paracasei)).